Consider the following 120-residue polypeptide: Aspartate 1-decarboxylase (120 aa).

Residue Ser-25 is the Schiff-base intermediate with substrate; via pyruvic acid of the active site. Residue Ser-25 is modified to Pyruvic acid (Ser). Thr-57 is a substrate binding site. The active-site Proton donor is Tyr-58. Substrate is bound at residue 73–75 (GAA).

It belongs to the PanD family. As to quaternary structure, heterooctamer of four alpha and four beta subunits. The cofactor is pyruvate. In terms of processing, is synthesized initially as an inactive proenzyme, which is activated by self-cleavage at a specific serine bond to produce a beta-subunit with a hydroxyl group at its C-terminus and an alpha-subunit with a pyruvoyl group at its N-terminus.

Its subcellular location is the cytoplasm. It carries out the reaction L-aspartate + H(+) = beta-alanine + CO2. The protein operates within cofactor biosynthesis; (R)-pantothenate biosynthesis; beta-alanine from L-aspartate: step 1/1. Its function is as follows. Catalyzes the pyruvoyl-dependent decarboxylation of aspartate to produce beta-alanine. The polypeptide is Aspartate 1-decarboxylase (Methylibium petroleiphilum (strain ATCC BAA-1232 / LMG 22953 / PM1)).